The following is a 279-amino-acid chain: Thymidylate synthase (279 aa).

Residue 141–142 (RR) participates in dUMP binding. Cys-161 serves as the catalytic Nucleophile. DUMP is bound by residues 181-184 (RSND), Asn-192, and 222-224 (HIY). Residue Asp-184 participates in (6R)-5,10-methylene-5,6,7,8-tetrahydrofolate binding. Ala-278 contacts (6R)-5,10-methylene-5,6,7,8-tetrahydrofolate.

Belongs to the thymidylate synthase family. Bacterial-type ThyA subfamily. Homodimer.

It is found in the cytoplasm. The enzyme catalyses dUMP + (6R)-5,10-methylene-5,6,7,8-tetrahydrofolate = 7,8-dihydrofolate + dTMP. It participates in pyrimidine metabolism; dTTP biosynthesis. In terms of biological role, catalyzes the reductive methylation of 2'-deoxyuridine-5'-monophosphate (dUMP) to 2'-deoxythymidine-5'-monophosphate (dTMP) while utilizing 5,10-methylenetetrahydrofolate (mTHF) as the methyl donor and reductant in the reaction, yielding dihydrofolate (DHF) as a by-product. This enzymatic reaction provides an intracellular de novo source of dTMP, an essential precursor for DNA biosynthesis. This Bacillus licheniformis (strain ATCC 14580 / DSM 13 / JCM 2505 / CCUG 7422 / NBRC 12200 / NCIMB 9375 / NCTC 10341 / NRRL NRS-1264 / Gibson 46) protein is Thymidylate synthase.